The chain runs to 190 residues: Movement protein TGB3 (190 aa).

Topologically, residues 1-52 (MDPPVILHSPNCSCQFCSSELPSTHTCGSQDRTVPLHVEATAAGHMEAKNFS) are cytoplasmic. Residues 53–73 (LQYVLLVAFVSVLLGFSFCVY) traverse the membrane as a helical segment. The Lumenal segment spans residues 74-166 (LKSMSNDEAS…TPCENNVLLK (93 aa)). Residues Tyr89 and Tyr120 each carry the phosphotyrosine modification. The Involved in plasmodesmata targeting and virus cell-to-cell movement motif lies at 89–93 (YQDLN). A helical membrane pass occupies residues 167–187 (LWKDDLSFTIIAVTVLVGAML). Residues 188 to 190 (ARC) are Cytoplasmic-facing.

Belongs to the virgaviridae TGB3 movement protein family. In terms of assembly, interacts with movement protein TGB2. TGB1-TGB3-TGB2 complex formation is enhanced by ATP hydrolysis.

The protein localises to the host cell junction. It is found in the host plasmodesma. Its subcellular location is the host endoplasmic reticulum membrane. It localises to the host cytoplasm. The protein resides in the host cytoskeleton. Participates in the transport of viral genome to neighboring plant cells directly through plasmodesmata, without any budding. TGBp2 and TGBp3 are necessary for intracellular delivery of TGBp1-containing vRNPs to plasmodesmata. Can gate plasmodesmata and increase their size exclusion limit. Induces host actin cytoskeleton network thickening, which probably plays a major role in virus cell-to-cell movement. The polypeptide is Movement protein TGB3 (Solanum nigrum (Black nightshade)).